A 159-amino-acid chain; its full sequence is NADH-quinone oxidoreductase subunit B (159 aa).

[4Fe-4S] cluster is bound by residues C37, C38, C102, and C132.

Belongs to the complex I 20 kDa subunit family. NDH-1 is composed of 14 different subunits. Subunits NuoB, C, D, E, F, and G constitute the peripheral sector of the complex. Requires [4Fe-4S] cluster as cofactor.

The protein resides in the cell inner membrane. The enzyme catalyses a quinone + NADH + 5 H(+)(in) = a quinol + NAD(+) + 4 H(+)(out). Functionally, NDH-1 shuttles electrons from NADH, via FMN and iron-sulfur (Fe-S) centers, to quinones in the respiratory chain. Couples the redox reaction to proton translocation (for every two electrons transferred, four hydrogen ions are translocated across the cytoplasmic membrane), and thus conserves the redox energy in a proton gradient. The sequence is that of NADH-quinone oxidoreductase subunit B from Polaromonas naphthalenivorans (strain CJ2).